Reading from the N-terminus, the 442-residue chain is Protein phosphatase 2C 3 (442 aa).

The disordered stretch occupies residues arginine 30–valine 100. Residues proline 79–aspartate 90 are compositionally biased toward acidic residues. One can recognise a PPM-type phosphatase domain in the interval arginine 120 to leucine 433. Aspartate 162, glycine 163, and aspartate 339 together coordinate Mn(2+). The segment at glycine 363–isoleucine 401 is disordered. Positions arginine 376 to valine 390 are enriched in basic and acidic residues. Position 424 (aspartate 424) interacts with Mn(2+).

It belongs to the PP2C family. In terms of assembly, part of a K(+)-channel calcium-sensing kinase/phosphatase complex composed by a calcium sensor CBL (CBL1, CBL2, CBL3 or CBL9), a kinase CIPK (CIPK6, CIPK16 or CIPK23), a phosphatase PP2C (AIP1) and a K(+)-channel (AKT1). Interacts with AKT1 and CIPK23. Interacts with PYL8/RCAR3 in an abscisic acid-independent. Interacts with PYR1/RCAR11 in an abscisic acid-dependent manner. Mg(2+) serves as cofactor. It depends on Mn(2+) as a cofactor. As to expression, expressed in shoot meristem, vascular tissues of cotyledons, and in primary roots surrounding the root meristem. Highly expressed in seeds.

The protein localises to the cell membrane. The protein resides in the cytoplasm. Its subcellular location is the nucleus. The catalysed reaction is O-phospho-L-seryl-[protein] + H2O = L-seryl-[protein] + phosphate. The enzyme catalyses O-phospho-L-threonyl-[protein] + H2O = L-threonyl-[protein] + phosphate. Involved in the negative regulation of the K(+) potassium channel AKT1 by its dephosphorylation, antagonistically to CIPK proteins (e.g. CIPK23). Functions as a positive regulator of abscisic acid-mediated cell signaling during seedling growth. Involved in the regulation of seed dormancy. Acts as a negative regulator of seed dormancy by inhibiting abscisic signaling and subsequently activating gibberellic acid signaling. The sequence is that of Protein phosphatase 2C 3 from Arabidopsis thaliana (Mouse-ear cress).